Consider the following 118-residue polypeptide: Large ribosomal subunit protein eL18 (118 aa).

This sequence belongs to the eukaryotic ribosomal protein eL18 family.

The chain is Large ribosomal subunit protein eL18 from Sulfurisphaera tokodaii (strain DSM 16993 / JCM 10545 / NBRC 100140 / 7) (Sulfolobus tokodaii).